The following is a 348-amino-acid chain: Protein RecA (348 aa).

ATP is bound at residue 65 to 72; that stretch reads GPESSGKT.

This sequence belongs to the RecA family.

It is found in the cytoplasm. Its function is as follows. Can catalyze the hydrolysis of ATP in the presence of single-stranded DNA, the ATP-dependent uptake of single-stranded DNA by duplex DNA, and the ATP-dependent hybridization of homologous single-stranded DNAs. It interacts with LexA causing its activation and leading to its autocatalytic cleavage. This chain is Protein RecA, found in Alteromonas mediterranea (strain DSM 17117 / CIP 110805 / LMG 28347 / Deep ecotype).